We begin with the raw amino-acid sequence, 489 residues long: UDP-N-acetylmuramate--L-alanine ligase (489 aa).

ATP is bound at residue 128 to 134 (GTHGKTT).

This sequence belongs to the MurCDEF family.

It localises to the cytoplasm. The enzyme catalyses UDP-N-acetyl-alpha-D-muramate + L-alanine + ATP = UDP-N-acetyl-alpha-D-muramoyl-L-alanine + ADP + phosphate + H(+). Its pathway is cell wall biogenesis; peptidoglycan biosynthesis. Cell wall formation. This is UDP-N-acetylmuramate--L-alanine ligase from Shewanella woodyi (strain ATCC 51908 / MS32).